The chain runs to 513 residues: Na(+)/H(+) antiporter NhaB (513 aa).

Transmembrane regions (helical) follow at residues 23 to 43 (LALI…PFVA), 52 to 72 (IFTL…LLAI), 97 to 117 (LLLM…LFIF), 120 to 140 (LLLS…AAAF), 144 to 164 (FLDA…FYGI), 202 to 222 (LMMH…VGEP), 238 to 258 (FFLR…LTCL), 303 to 323 (AIIG…VGLI), 348 to 368 (TESL…AVII), 391 to 411 (LFYI…VGTI), 447 to 467 (ATPN…APLI), and 475 to 495 (VWMA…CVEF).

Belongs to the NhaB Na(+)/H(+) (TC 2.A.34) antiporter family.

It localises to the cell inner membrane. The enzyme catalyses 2 Na(+)(in) + 3 H(+)(out) = 2 Na(+)(out) + 3 H(+)(in). Na(+)/H(+) antiporter that extrudes sodium in exchange for external protons. The sequence is that of Na(+)/H(+) antiporter NhaB from Shigella sonnei (strain Ss046).